Reading from the N-terminus, the 225-residue chain is NAD(P)H-quinone oxidoreductase subunit K, chloroplastic (225 aa).

[4Fe-4S] cluster-binding residues include Cys43, Cys44, Cys108, and Cys139.

The protein belongs to the complex I 20 kDa subunit family. NDH is composed of at least 16 different subunits, 5 of which are encoded in the nucleus. Requires [4Fe-4S] cluster as cofactor.

It is found in the plastid. The protein localises to the chloroplast thylakoid membrane. It catalyses the reaction a plastoquinone + NADH + (n+1) H(+)(in) = a plastoquinol + NAD(+) + n H(+)(out). The catalysed reaction is a plastoquinone + NADPH + (n+1) H(+)(in) = a plastoquinol + NADP(+) + n H(+)(out). In terms of biological role, NDH shuttles electrons from NAD(P)H:plastoquinone, via FMN and iron-sulfur (Fe-S) centers, to quinones in the photosynthetic chain and possibly in a chloroplast respiratory chain. The immediate electron acceptor for the enzyme in this species is believed to be plastoquinone. Couples the redox reaction to proton translocation, and thus conserves the redox energy in a proton gradient. This is NAD(P)H-quinone oxidoreductase subunit K, chloroplastic from Olimarabidopsis pumila (Dwarf rocket).